We begin with the raw amino-acid sequence, 410 residues long: Protein LTV1 homolog (410 aa).

Disordered regions lie at residues 142 to 165 and 325 to 378; these read VYRS…DEMY and EMDI…ARKL. 2 stretches are compositionally biased toward acidic residues: residues 151–165 and 325–345; these read DSEE…DEMY and EMDI…DDDK. Over residues 357–366 the composition is skewed to basic and acidic residues; that stretch reads PKNETPEQRS. The stretch at 363–389 forms a coiled coil; the sequence is EQRSLRKKAVKEARKLRRVEKKANKTM. Residues 367–378 are compositionally biased toward basic residues; the sequence is LRKKAVKEARKL.

It belongs to the LTV1 family.

In Caenorhabditis elegans, this protein is Protein LTV1 homolog.